Here is a 158-residue protein sequence, read N- to C-terminus: Cyclic pyranopterin monophosphate synthase (158 aa).

Substrate is bound by residues 75 to 77 (LCH) and 113 to 114 (ME). Aspartate 128 is an active-site residue.

It belongs to the MoaC family. In terms of assembly, homohexamer; trimer of dimers.

The catalysed reaction is (8S)-3',8-cyclo-7,8-dihydroguanosine 5'-triphosphate = cyclic pyranopterin phosphate + diphosphate. Its pathway is cofactor biosynthesis; molybdopterin biosynthesis. Its function is as follows. Catalyzes the conversion of (8S)-3',8-cyclo-7,8-dihydroguanosine 5'-triphosphate to cyclic pyranopterin monophosphate (cPMP). The sequence is that of Cyclic pyranopterin monophosphate synthase from Dinoroseobacter shibae (strain DSM 16493 / NCIMB 14021 / DFL 12).